Consider the following 118-residue polypeptide: Hydrogenase maturation factor HypA (118 aa).

A Ni(2+)-binding site is contributed by H2. Positions 74, 77, 91, and 94 each coordinate Zn(2+).

Belongs to the HypA/HybF family.

Functionally, involved in the maturation of [NiFe] hydrogenases. Required for nickel insertion into the metal center of the hydrogenase. The polypeptide is Hydrogenase maturation factor HypA (Helicobacter hepaticus (strain ATCC 51449 / 3B1)).